The sequence spans 349 residues: ATP phosphoribosyltransferase regulatory subunit (349 aa).

The interval 327–349 (GRGRGVRPRRASARGGRARARPR) is disordered. Positions 330 to 349 (RGVRPRRASARGGRARARPR) are enriched in basic residues.

The protein belongs to the class-II aminoacyl-tRNA synthetase family. HisZ subfamily. As to quaternary structure, heteromultimer composed of HisG and HisZ subunits.

It is found in the cytoplasm. It functions in the pathway amino-acid biosynthesis; L-histidine biosynthesis; L-histidine from 5-phospho-alpha-D-ribose 1-diphosphate: step 1/9. Its function is as follows. Required for the first step of histidine biosynthesis. May allow the feedback regulation of ATP phosphoribosyltransferase activity by histidine. This Anaeromyxobacter dehalogenans (strain 2CP-1 / ATCC BAA-258) protein is ATP phosphoribosyltransferase regulatory subunit.